The following is a 99-amino-acid chain: NADH-quinone oxidoreductase subunit K (99 aa).

The next 3 helical transmembrane spans lie at 3–23 (PDNY…GVLL), 28–48 (IVMF…FVTF), and 59–79 (VVAF…LAII).

The protein belongs to the complex I subunit 4L family. NDH-1 is composed of 14 different subunits. Subunits NuoA, H, J, K, L, M, N constitute the membrane sector of the complex.

Its subcellular location is the cell membrane. It carries out the reaction a quinone + NADH + 5 H(+)(in) = a quinol + NAD(+) + 4 H(+)(out). Functionally, NDH-1 shuttles electrons from NADH, via FMN and iron-sulfur (Fe-S) centers, to quinones in the respiratory chain. The immediate electron acceptor for the enzyme in this species is believed to be a menaquinone. Couples the redox reaction to proton translocation (for every two electrons transferred, four hydrogen ions are translocated across the cytoplasmic membrane), and thus conserves the redox energy in a proton gradient. In Mycolicibacterium gilvum (strain PYR-GCK) (Mycobacterium gilvum (strain PYR-GCK)), this protein is NADH-quinone oxidoreductase subunit K.